Consider the following 705-residue polypeptide: Choline transporter-like protein 2 (705 aa).

Topologically, residues 1–31 (MEDQRKYGAYGTPQKYDPTFKGPIYNRGCTD) are cytoplasmic. Thr12 carries the phosphothreonine modification. Residues 32–52 (VLCCVLLFLAIVGYVAVGLIA) traverse the membrane as a helical segment. The Extracellular segment spans residues 53–231 (WTHGDPRKVI…RIFEDYTVSW (179 aa)). N-linked (GlcNAc...) asparagine glycans are attached at residues Asn186 and Asn199. The helical transmembrane segment at 232 to 252 (YWIVIGLVIAMVLSLLFIILL) threads the bilayer. The Cytoplasmic portion of the chain corresponds to 253–255 (RFL). The helical transmembrane segment at 256-276 (AGIMVWVMIVLVILVLGYGIF) threads the bilayer. Residues 277 to 314 (HCYMEYARLRGEAGSDISVLDLGFQTDFRVYLHLRQTW) lie on the Extracellular side of the membrane. Residues 315-335 (LAFMIILSILEVIIILLLIFL) form a helical membrane-spanning segment. Residues 336–363 (RKRILIAIALIKEASRAVGYVMCSLLYP) are Cytoplasmic-facing. A helical membrane pass occupies residues 364–384 (LVTFFLLCLCIAYWASTAVFL). At 385–455 (STSNEAVYKI…IFNAFMFFWL (71 aa)) the chain is on the extracellular side. Asn414 carries an N-linked (GlcNAc...) asparagine glycan. A helical transmembrane segment spans residues 456 to 478 (ANFVLALGQVTLAGAFASYYWAL). Topologically, residues 479-503 (RKPDDMPAFPLFAAFGRALRYHTGS) are cytoplasmic. A helical membrane pass occupies residues 504–524 (LAFGSLILAIVQIIRVILEYL). Residues 525 to 562 (DQRLKAAENKFAKFLMTCLKCCFWCLEKFIKFLNRNAY) are Extracellular-facing. The chain crosses the membrane as a helical span at residues 563-583 (IMIAIYGTNFCTSARNAFFLL). Over 584–598 (MRNIIRVAVLDKVTD) the chain is Cytoplasmic. The helical transmembrane segment at 599–619 (FLFLLGKLLIVGSVGILAFFF) threads the bilayer. At 620–637 (FTHRIRIVQDTAPPLNYY) the chain is on the extracellular side. Residues 638–658 (WVPILTVIVGSYLIAHGFFSV) form a helical membrane-spanning segment. Over 659 to 705 (YGMCVDTLFLCFLEDLERNNGSSERPYFMSSTLKKLLNKTNKKPVES) the chain is Cytoplasmic.

It belongs to the CTL (choline transporter-like) family. Interacts with COCH. In terms of processing, N-glycosylated; contains sialic acid. Not O-glycosylated. In terms of tissue distribution, expressed at high levels in lung, colon and in supporting cells of the inner ear (at protein level). Progressively lower levels in brain, tongue, liver and kidney (at protein level). In the tongue, strongly expressed in epithelial cells and in nerves within the musculature. Within the nerves, expression observed in the perineurial cells of the nerve sheath, in the Schwann cells and myelinated nerve fibers (at protein level). In the kidney, prominent expression in glomeruli in the lining of Bowman's capsule and on the mesangial cells adjacent to the vessels within the glomerulus (at protein level). Strongly expressed on the membranes of splenocytes (at protein level).

The protein localises to the cell membrane. Its subcellular location is the mitochondrion outer membrane. The enzyme catalyses choline(out) + n H(+)(in) = choline(in) + n H(+)(out). It catalyses the reaction ethanolamine(out) + n H(+)(in) = ethanolamine(in) + n H(+)(out). Functionally, choline/H+ antiporter, mainly in mitochodria. Also acts as a low-affinity ethanolamine/H+ antiporter, regulating the supply of extracellular ethanolamine (Etn) for the CDP-Etn pathway, redistribute intracellular Etn and balance the CDP-Cho and CDP-Etn arms of the Kennedy pathway. This chain is Choline transporter-like protein 2 (SLC44A2), found in Cavia porcellus (Guinea pig).